Here is a 273-residue protein sequence, read N- to C-terminus: NH(3)-dependent NAD(+) synthetase (273 aa).

46–53 (GISGGQDS) is an ATP binding site. A Mg(2+)-binding site is contributed by Asp52. Arg139 contacts deamido-NAD(+). ATP is bound at residue Thr159. Glu164 serves as a coordination point for Mg(2+). 2 residues coordinate deamido-NAD(+): Lys172 and Asp179. ATP-binding residues include Lys188 and Thr210. Residue 259 to 260 (HK) participates in deamido-NAD(+) binding.

The protein belongs to the NAD synthetase family. In terms of assembly, homodimer.

The catalysed reaction is deamido-NAD(+) + NH4(+) + ATP = AMP + diphosphate + NAD(+) + H(+). It participates in cofactor biosynthesis; NAD(+) biosynthesis; NAD(+) from deamido-NAD(+) (ammonia route): step 1/1. Its function is as follows. Catalyzes the ATP-dependent amidation of deamido-NAD to form NAD. Uses ammonia as a nitrogen source. The protein is NH(3)-dependent NAD(+) synthetase of Mycobacteroides abscessus (strain ATCC 19977 / DSM 44196 / CCUG 20993 / CIP 104536 / JCM 13569 / NCTC 13031 / TMC 1543 / L948) (Mycobacterium abscessus).